The sequence spans 137 residues: Large ribosomal subunit protein uL16 (137 aa).

Belongs to the universal ribosomal protein uL16 family. As to quaternary structure, part of the 50S ribosomal subunit.

Functionally, binds 23S rRNA and is also seen to make contacts with the A and possibly P site tRNAs. The chain is Large ribosomal subunit protein uL16 from Methylorubrum extorquens (strain CM4 / NCIMB 13688) (Methylobacterium extorquens).